The following is a 248-amino-acid chain: Probable phosphatase VFMJ11_A0091 (248 aa).

Histidine 8, histidine 10, histidine 16, histidine 41, glutamate 74, histidine 102, histidine 132, aspartate 194, and histidine 196 together coordinate Zn(2+).

Belongs to the PHP family. Zn(2+) serves as cofactor.

The sequence is that of Probable phosphatase VFMJ11_A0091 from Aliivibrio fischeri (strain MJ11) (Vibrio fischeri).